An 872-amino-acid polypeptide reads, in one-letter code: MATRFKHQFSISLALTFFFFFTKTFSFTENEELGNLLRFKASFDDPKGSLSGWFNTSSSHHCNWTGITCTRAPTLYVSSINLQSLNLSGEISDSICDLPYLTHLDLSLNFFNQPIPLQLSRCVTLETLNLSSNLIWGTIPDQISEFSSLKVIDFSSNHVEGMIPEDLGLLFNLQVLNLGSNLLTGIVPPAIGKLSELVVLDLSENSYLVSEIPSFLGKLDKLEQLLLHRSGFHGEIPTSFVGLTSLRTLDLSLNNLSGEIPRSLGPSLKNLVSLDVSQNKLSGSFPSGICSGKRLINLSLHSNFFEGSLPNSIGECLSLERLQVQNNGFSGEFPVVLWKLPRIKIIRADNNRFTGQVPESVSLASALEQVEIVNNSFSGEIPHGLGLVKSLYKFSASQNRFSGELPPNFCDSPVLSIVNISHNRLLGKIPELKNCKKLVSLSLAGNAFTGEIPPSLADLHVLTYLDLSDNSLTGLIPQGLQNLKLALFNVSFNGLSGEVPHSLVSGLPASFLQGNPELCGPGLPNSCSSDRSNFHKKGGKALVLSLICLALAIATFLAVLYRYSRKKVQFKSTWRSEFYYPFKLTEHELMKVVNESCPSGSEVYVLSLSSGELLAVKKLVNSKNISSKSLKAQVRTIAKIRHKNITRILGFCFKDEMIFLIYEFTQNGSLHDMLSRAGDQLPWSIRLKIALGVAQALAYISKDYVPHLLHRNLKSANIFLDKDFEPKLSDFALDHIVGETAFQSLVHANTNSCYTAPENHYSKKATEDMDVYSFGVVLLELVTGQSAEKAEEGSSGESLDIVKQVRRKINLTDGAAQVLDQKILSDSCQSDMRKTLDIALDCTAVAAEKRPSLVKVIKLLEGISSSVSPVSA.

The first 26 residues, 1 to 26 (MATRFKHQFSISLALTFFFFFTKTFS), serve as a signal peptide directing secretion. Residues 27 to 540 (FTENEELGNL…RSNFHKKGGK (514 aa)) are Extracellular-facing. Asn-55, Asn-63, and Asn-86 each carry an N-linked (GlcNAc...) asparagine glycan. 18 LRR repeats span residues 79–98 (SINL…ICDL), 99–122 (PYLT…LSRC), 123–146 (VTLE…ISEF), 147–169 (SSLK…DLGL), 171–193 (FNLQ…AIGK), 195–217 (SELV…SFLG), 219–243 (LDKL…FVGL), 244–267 (TSLR…LGPS), 269–292 (KNLV…ICSG), 294–316 (RLIN…IGEC), 317–340 (LSLE…LWKL), 341–365 (PRIK…SLAS), 367–389 (LEQV…GLVK), 391–412 (LYKF…FCDS), 413–435 (PVLS…LKNC), 436–459 (KKLV…LADL), 460–482 (HVLT…GLQN), and 484–506 (KLAL…LVSG). Residue Asn-129 is glycosylated (N-linked (GlcNAc...) asparagine). N-linked (GlcNAc...) asparagine glycosylation occurs at Asn-255. N-linked (GlcNAc...) asparagine glycosylation is present at Asn-297. An N-linked (GlcNAc...) asparagine glycan is attached at Asn-374. Asn-419 carries N-linked (GlcNAc...) asparagine glycosylation. N-linked (GlcNAc...) asparagine glycosylation occurs at Asn-489. A helical membrane pass occupies residues 541-561 (ALVLSLICLALAIATFLAVLY). Residues 562–872 (RYSRKKVQFK…ISSSVSPVSA (311 aa)) lie on the Cytoplasmic side of the membrane. Position 585 is a phosphothreonine (Thr-585). Residues 589–863 (LMKVVNESCP…VKVIKLLEGI (275 aa)) form the Protein kinase domain. ATP contacts are provided by residues 595–603 (ESCPSGSEV) and Lys-617. Phosphotyrosine is present on residues Tyr-662, Tyr-699, Tyr-754, and Tyr-761.

This sequence belongs to the protein kinase superfamily. Ser/Thr protein kinase family.

Its subcellular location is the membrane. This is Probably inactive leucine-rich repeat receptor-like protein kinase At5g06940 from Arabidopsis thaliana (Mouse-ear cress).